We begin with the raw amino-acid sequence, 219 residues long: Large ribosomal subunit protein uL3 (219 aa).

This sequence belongs to the universal ribosomal protein uL3 family. In terms of assembly, part of the 50S ribosomal subunit. Forms a cluster with proteins L14 and L19.

In terms of biological role, one of the primary rRNA binding proteins, it binds directly near the 3'-end of the 23S rRNA, where it nucleates assembly of the 50S subunit. The sequence is that of Large ribosomal subunit protein uL3 from Salinispora arenicola (strain CNS-205).